We begin with the raw amino-acid sequence, 80 residues long: MWLKIQVFVLALALITLGIQAEPNSGPNNPLIQEEARACADVYKECWYPEKPCCKDRACQCTLGMTCKCKATLGDLFGRR.

An N-terminal signal peptide occupies residues 1–21; that stretch reads MWLKIQVFVLALALITLGIQA. Positions 22–37 are excised as a propeptide; that stretch reads EPNSGPNNPLIQEEAR. 4 disulfide bridges follow: Cys39/Cys54, Cys46/Cys59, Cys53/Cys69, and Cys61/Cys67. The propeptide occupies 72 to 80; it reads TLGDLFGRR.

It belongs to the neurotoxin 02 (plectoxin) family. 01 (Tx3) subfamily. In terms of tissue distribution, expressed by the venom gland.

Its subcellular location is the secreted. Functionally, antagonist of L-type calcium channels (Cav1/CACNA1). This Phoneutria nigriventer (Brazilian armed spider) protein is U6-ctenitoxin-Pn1a.